We begin with the raw amino-acid sequence, 201 residues long: Protein GrpE (201 aa).

The protein belongs to the GrpE family. In terms of assembly, homodimer.

Its subcellular location is the cytoplasm. In terms of biological role, participates actively in the response to hyperosmotic and heat shock by preventing the aggregation of stress-denatured proteins, in association with DnaK and GrpE. It is the nucleotide exchange factor for DnaK and may function as a thermosensor. Unfolded proteins bind initially to DnaJ; upon interaction with the DnaJ-bound protein, DnaK hydrolyzes its bound ATP, resulting in the formation of a stable complex. GrpE releases ADP from DnaK; ATP binding to DnaK triggers the release of the substrate protein, thus completing the reaction cycle. Several rounds of ATP-dependent interactions between DnaJ, DnaK and GrpE are required for fully efficient folding. This chain is Protein GrpE, found in Shewanella frigidimarina (strain NCIMB 400).